Here is a 141-residue protein sequence, read N- to C-terminus: Sperm-associated microtubule inner protein 10 (141 aa).

Basic and acidic residues predominate over residues 1 to 16; sequence MASEKDDGPALPKLDD. Residues 1–33 are disordered; the sequence is MASEKDDGPALPKLDDDNQTAENTCKPAEEQPQ.

In terms of assembly, microtubule inner protein component of sperm flagellar doublet microtubules. Expressed predominantly in the testis.

Its subcellular location is the cytoplasm. It is found in the cytoskeleton. The protein localises to the flagellum axoneme. In terms of biological role, microtubule inner protein (MIP) part of the dynein-decorated doublet microtubules (DMTs) in flagellum axoneme, which is required for flagellum beating. May serve to reinforce and thus stabilize the microtubule structure in the sperm flagella. Involved in the regulation of sperm motility. The sequence is that of Sperm-associated microtubule inner protein 10 (Spmip10) from Mus musculus (Mouse).